The following is a 335-amino-acid chain: MATKVVLDFEKPLFELEAKLDEMRQCLRNSTREQSPSETEMLNHDIETLELKVDALRRSIYKNLTRWQKVQLARHPARPYTLDYIHLMTRDFLELAGDRRYSDDKAIIGGFARIEESATGFSQPVMIIGHQKGRDTKSNLYRNFGMAQPEGYRKALRLMQLAEKFRKPVITLIDTPGAFPGIEAEERGTAEAIARNLYEMAKLTVPVICVIIGEGASGGAIGIGVGDRILMAENSWYSVISPESCSSILWRSWKYKEQAAEALQLTAVDLLSQGIIDRIIPEPVGGAHTDPDVMAATLKEILIEELKALLPKDPATLVHERIEKFSSMGVWNEEE.

The region spanning 48–308 (TLELKVDALR…KEILIEELKA (261 aa)) is the CoA carboxyltransferase C-terminal domain.

This sequence belongs to the AccA family. Acetyl-CoA carboxylase is a heterohexamer composed of biotin carboxyl carrier protein (AccB), biotin carboxylase (AccC) and two subunits each of ACCase subunit alpha (AccA) and ACCase subunit beta (AccD).

It is found in the cytoplasm. It catalyses the reaction N(6)-carboxybiotinyl-L-lysyl-[protein] + acetyl-CoA = N(6)-biotinyl-L-lysyl-[protein] + malonyl-CoA. It functions in the pathway lipid metabolism; malonyl-CoA biosynthesis; malonyl-CoA from acetyl-CoA: step 1/1. Functionally, component of the acetyl coenzyme A carboxylase (ACC) complex. First, biotin carboxylase catalyzes the carboxylation of biotin on its carrier protein (BCCP) and then the CO(2) group is transferred by the carboxyltransferase to acetyl-CoA to form malonyl-CoA. This is Acetyl-coenzyme A carboxylase carboxyl transferase subunit alpha from Pelodictyon phaeoclathratiforme (strain DSM 5477 / BU-1).